Consider the following 317-residue polypeptide: DNA-directed RNA polymerase subunit alpha (317 aa).

The interval 1-234 is alpha N-terminal domain (alpha-NTD); that stretch reads MKQFVRPEFI…AHLEFFIDLN (234 aa). Residues 250–317 form an alpha C-terminal domain (alpha-CTD) region; the sequence is DKELDRTVEE…ASLGLAFRQS (68 aa).

The protein belongs to the RNA polymerase alpha chain family. As to quaternary structure, homodimer. The RNAP catalytic core consists of 2 alpha, 1 beta, 1 beta' and 1 omega subunit. When a sigma factor is associated with the core the holoenzyme is formed, which can initiate transcription.

The catalysed reaction is RNA(n) + a ribonucleoside 5'-triphosphate = RNA(n+1) + diphosphate. Its function is as follows. DNA-dependent RNA polymerase catalyzes the transcription of DNA into RNA using the four ribonucleoside triphosphates as substrates. The chain is DNA-directed RNA polymerase subunit alpha from Mycoplasma mycoides subsp. mycoides SC (strain CCUG 32753 / NCTC 10114 / PG1).